A 273-amino-acid chain; its full sequence is Transmembrane epididymal protein 1 (273 aa).

The next 6 membrane-spanning stretches (helical) occupy residues 34-54 (IVTG…GMVL), 72-92 (LTMF…KNVL), 96-116 (CVGL…LLMV), 129-149 (VYSL…AELW), 158-178 (LMET…GFIL), and 195-215 (IMFV…FLLG).

Belongs to the TMEM45 family.

Its subcellular location is the membrane. This is Transmembrane epididymal protein 1 (TEDDM1) from Homo sapiens (Human).